Consider the following 454-residue polypeptide: Exodeoxyribonuclease 7 large subunit (454 aa).

Residues 337 to 352 (ANQRQQRASQRLRQQN) show a composition bias toward low complexity. Residues 337–359 (ANQRQQRASQRLRQQNPQPRIHR) are disordered.

This sequence belongs to the XseA family. Heterooligomer composed of large and small subunits.

Its subcellular location is the cytoplasm. It carries out the reaction Exonucleolytic cleavage in either 5'- to 3'- or 3'- to 5'-direction to yield nucleoside 5'-phosphates.. Bidirectionally degrades single-stranded DNA into large acid-insoluble oligonucleotides, which are then degraded further into small acid-soluble oligonucleotides. The sequence is that of Exodeoxyribonuclease 7 large subunit from Salmonella arizonae (strain ATCC BAA-731 / CDC346-86 / RSK2980).